Here is an 853-residue protein sequence, read N- to C-terminus: DNA mismatch repair protein MutS (853 aa).

614 to 621 provides a ligand contact to ATP; that stretch reads GPNMGGKS.

The protein belongs to the DNA mismatch repair MutS family.

This protein is involved in the repair of mismatches in DNA. It is possible that it carries out the mismatch recognition step. This protein has a weak ATPase activity. The sequence is that of DNA mismatch repair protein MutS from Escherichia coli O127:H6 (strain E2348/69 / EPEC).